We begin with the raw amino-acid sequence, 225 residues long: MAEGETKSPGPKKCGPYISSVTSQSVNLMIRGVVLFFIGVFLALVLNLLQIQRNVTLFPPDVIASIFSSAWWVPPCCGTASAVIGLLYPCIDRHLGEPHKFKREWSSVMRCVAVFVGINHASAKVDFDNNIQLSLTLAALSIGLWWTFDRSRSGFGLGVGIAFLATVVTQLLVYNGVYQYTSPDFLYVRSWLPCIFFAGGITMGNIGRQLAMYECKVIAEKSHQE.

The Cytoplasmic portion of the chain corresponds to 1–28 (MAEGETKSPGPKKCGPYISSVTSQSVNL). Residues 29–51 (MIRGVVLFFIGVFLALVLNLLQI) traverse the membrane as a helical segment. The Lumenal segment spans residues 52-70 (QRNVTLFPPDVIASIFSSA). A helical membrane pass occupies residues 71–88 (WWVPPCCGTASAVIGLLY). Residues 89-103 (PCIDRHLGEPHKFKR) are Cytoplasmic-facing. The helical transmembrane segment at 104 to 126 (EWSSVMRCVAVFVGINHASAKVD) threads the bilayer. Topologically, residues 127–129 (FDN) are lumenal. Residues 130 to 148 (NIQLSLTLAALSIGLWWTF) form a helical membrane-spanning segment. At 149–153 (DRSRS) the chain is on the cytoplasmic side. Serine 151 carries the phosphoserine modification. A helical membrane pass occupies residues 154-175 (GFGLGVGIAFLATVVTQLLVYN). Residues 176–189 (GVYQYTSPDFLYVR) are Lumenal-facing. A helical transmembrane segment spans residues 190 to 207 (SWLPCIFFAGGITMGNIG). Over 208–225 (RQLAMYECKVIAEKSHQE) the chain is Cytoplasmic. Cysteine 215 carries the post-translational modification Cysteine sulfenic acid (-SOH); alternate. A Glycyl cysteine thioester (Cys-Gly) (interchain with G-Cter in ubiquitin); alternate cross-link involves residue cysteine 215. Positions 219 to 225 (AEKSHQE) match the KxHxx motif.

It belongs to the INSIG family. Interacts with SCAP; interaction is direct and only takes place in the presence of sterols; it prevents interaction between SCAP and the coat protein complex II (COPII). Associates with the SCAP-SREBP complex (composed of SCAP and SREBF1/SREBP1 or SREBF2/SREBP2); association is mediated via its interaction with SCAP and only takes place in the presence of sterols. Interacts with RNF139. Interacts with RNF145. Post-translationally, phosphorylation at Ser-151 by PCK1 reduces binding to oxysterol, disrupting the interaction between INSIG2 and SCAP, thereby promoting nuclear translocation of SREBP proteins (SREBF1/SREBP1 or SREBF2/SREBP2) and subsequent transcription of downstream lipogenesis-related genes. Polyubiquitinated by AMFR/gp78 at Cys-215 in some tissues such as adipose tissues, undifferentiated myoblasts and liver, leading to its degradation. In differentiated myotubes, Cys-215 oxidation prevents ubiquitination at the same site, resulting in protein stabilization. In terms of processing, oxidized at Cys-215 in differentiated myotubes, preventing ubiquitination at the same site, and resulting in protein stabilization.

It is found in the endoplasmic reticulum membrane. Oxysterol-binding protein that mediates feedback control of cholesterol synthesis by controlling both endoplasmic reticulum to Golgi transport of SCAP and degradation of HMGCR. Acts as a negative regulator of cholesterol biosynthesis by mediating the retention of the SCAP-SREBP complex in the endoplasmic reticulum, thereby blocking the processing of sterol regulatory element-binding proteins (SREBPs) SREBF1/SREBP1 and SREBF2/SREBP2. Binds oxysterol, including 22-hydroxycholesterol, 24-hydroxycholesterol, 25-hydroxycholesterol and 27-hydroxycholesterol, regulating interaction with SCAP and retention of the SCAP-SREBP complex in the endoplasmic reticulum. In presence of oxysterol, interacts with SCAP, retaining the SCAP-SREBP complex in the endoplasmic reticulum, thereby preventing SCAP from escorting SREBF1/SREBP1 and SREBF2/SREBP2 to the Golgi. Sterol deprivation or phosphorylation by PCK1 reduce oxysterol-binding, disrupting the interaction between INSIG2 and SCAP, thereby promoting Golgi transport of the SCAP-SREBP complex, followed by processing and nuclear translocation of SREBF1/SREBP1 and SREBF2/SREBP2. Also regulates cholesterol synthesis by regulating degradation of HMGCR: initiates the sterol-mediated ubiquitin-mediated endoplasmic reticulum-associated degradation (ERAD) of HMGCR via recruitment of the reductase to the ubiquitin ligase RNF139. The protein is Insulin-induced gene 2 protein of Pongo abelii (Sumatran orangutan).